The following is a 211-amino-acid chain: tRNA (guanine-N(7)-)-methyltransferase (211 aa).

Positions 40, 65, 92, and 118 each coordinate S-adenosyl-L-methionine. Asp-118 is a catalytic residue. 2 residues coordinate substrate: Lys-122 and Asp-154.

It belongs to the class I-like SAM-binding methyltransferase superfamily. TrmB family.

It catalyses the reaction guanosine(46) in tRNA + S-adenosyl-L-methionine = N(7)-methylguanosine(46) in tRNA + S-adenosyl-L-homocysteine. The protein operates within tRNA modification; N(7)-methylguanine-tRNA biosynthesis. Functionally, catalyzes the formation of N(7)-methylguanine at position 46 (m7G46) in tRNA. The protein is tRNA (guanine-N(7)-)-methyltransferase of Microcystis aeruginosa (strain NIES-843 / IAM M-2473).